The sequence spans 413 residues: Argininosuccinate synthase (413 aa).

Residues 12–20 (AYSGGLDTS) and Ala39 contribute to the ATP site. L-citrulline-binding residues include Tyr92 and Ser97. Gly122 provides a ligand contact to ATP. Residues Thr124, Asn128, and Asp129 each contribute to the L-aspartate site. L-citrulline is bound at residue Asn128. Positions 132, 189, 198, 274, and 286 each coordinate L-citrulline.

Belongs to the argininosuccinate synthase family. Type 1 subfamily. Homotetramer.

The protein localises to the cytoplasm. It catalyses the reaction L-citrulline + L-aspartate + ATP = 2-(N(omega)-L-arginino)succinate + AMP + diphosphate + H(+). It participates in amino-acid biosynthesis; L-arginine biosynthesis; L-arginine from L-ornithine and carbamoyl phosphate: step 2/3. The sequence is that of Argininosuccinate synthase from Aliarcobacter butzleri (strain RM4018) (Arcobacter butzleri).